The chain runs to 189 residues: Peptidyl-tRNA hydrolase (189 aa).

TRNA is bound at residue tyrosine 14. The Proton acceptor role is filled by histidine 19. Residues tyrosine 64, asparagine 66, and asparagine 112 each coordinate tRNA.

It belongs to the PTH family. In terms of assembly, monomer.

It localises to the cytoplasm. The catalysed reaction is an N-acyl-L-alpha-aminoacyl-tRNA + H2O = an N-acyl-L-amino acid + a tRNA + H(+). Functionally, hydrolyzes ribosome-free peptidyl-tRNAs (with 1 or more amino acids incorporated), which drop off the ribosome during protein synthesis, or as a result of ribosome stalling. Its function is as follows. Catalyzes the release of premature peptidyl moieties from peptidyl-tRNA molecules trapped in stalled 50S ribosomal subunits, and thus maintains levels of free tRNAs and 50S ribosomes. In Clostridium botulinum (strain ATCC 19397 / Type A), this protein is Peptidyl-tRNA hydrolase.